The primary structure comprises 162 residues: Ribonuclease P protein component (162 aa).

The segment at 1–63 (MDEKDLATQP…PPAAGGKLLS (63 aa)) is disordered. Residues 21 to 38 (GPHEDPRRQEGVEAEKAE) are compositionally biased toward basic and acidic residues.

Belongs to the RnpA family. Consists of a catalytic RNA component (M1 or rnpB) and a protein subunit.

The enzyme catalyses Endonucleolytic cleavage of RNA, removing 5'-extranucleotides from tRNA precursor.. Functionally, RNaseP catalyzes the removal of the 5'-leader sequence from pre-tRNA to produce the mature 5'-terminus. It can also cleave other RNA substrates such as 4.5S RNA. The protein component plays an auxiliary but essential role in vivo by binding to the 5'-leader sequence and broadening the substrate specificity of the ribozyme. This Thermus scotoductus protein is Ribonuclease P protein component.